A 438-amino-acid chain; its full sequence is Glyceraldehyde-3-phosphate dehydrogenase B, chloroplastic (438 aa).

The transit peptide at 1–53 directs the protein to the chloroplast; it reads CLSKKFEVAEFAGLRSSGCVTFSNKESSFFDVVSAQLTPKTTRSTPVKGETVA. NADP(+) is bound by residues 64-65, D88, and R133; that span reads RI. D-glyceraldehyde 3-phosphate contacts are provided by residues 207-209, T238, R253, 266-267, and R289; these read SCT and TG. C208 (nucleophile) is an active-site residue. An NADP(+)-binding site is contributed by N372.

The protein belongs to the glyceraldehyde-3-phosphate dehydrogenase family. Tetramer of either four A chains (GAPDH 2) or two A and two B chains (GAPDH 1).

Its subcellular location is the plastid. It is found in the chloroplast. It carries out the reaction D-glyceraldehyde 3-phosphate + phosphate + NADP(+) = (2R)-3-phospho-glyceroyl phosphate + NADPH + H(+). The protein operates within carbohydrate biosynthesis; Calvin cycle. The polypeptide is Glyceraldehyde-3-phosphate dehydrogenase B, chloroplastic (GAPB) (Nicotiana tabacum (Common tobacco)).